Reading from the N-terminus, the 368-residue chain is Alanine racemase 3 (368 aa).

The active-site Proton acceptor; specific for D-alanine is Lys42. Lys42 is subject to N6-(pyridoxal phosphate)lysine. Arg141 contributes to the substrate binding site. Tyr262 serves as the catalytic Proton acceptor; specific for L-alanine. Residue Met310 coordinates substrate.

The protein belongs to the alanine racemase family. Pyridoxal 5'-phosphate is required as a cofactor.

It carries out the reaction L-alanine = D-alanine. The protein operates within amino-acid biosynthesis; D-alanine biosynthesis; D-alanine from L-alanine: step 1/1. In terms of biological role, catalyzes the interconversion of L-alanine and D-alanine. May also act on other amino acids. The sequence is that of Alanine racemase 3 (alr3) from Salmonella typhi.